The chain runs to 731 residues: Polyribonucleotide nucleotidyltransferase (731 aa).

2 residues coordinate Mg(2+): Asp488 and Asp494. One can recognise a KH domain in the interval 555–614; that stretch reads PRIEVINIAVDKIRDVIGSGGKVIREIVEQTGAKINIEDDGTIKIASADAKTIEAAKRWI. The 69-residue stretch at 624-692 folds into the S1 motif domain; that stretch reads GAIYQGTVVK…ERGKVRLSMK (69 aa). The segment at 693–731 is disordered; the sequence is AVDQKTGKEMTDDKSVKEEKCMDEKKQPENKRRRKKKEE. A compositionally biased stretch (basic and acidic residues) spans 694–722; that stretch reads VDQKTGKEMTDDKSVKEEKCMDEKKQPEN.

Belongs to the polyribonucleotide nucleotidyltransferase family. It depends on Mg(2+) as a cofactor.

It localises to the cytoplasm. The catalysed reaction is RNA(n+1) + phosphate = RNA(n) + a ribonucleoside 5'-diphosphate. Functionally, involved in mRNA degradation. Catalyzes the phosphorolysis of single-stranded polyribonucleotides processively in the 3'- to 5'-direction. The chain is Polyribonucleotide nucleotidyltransferase from Bartonella tribocorum (strain CIP 105476 / IBS 506).